The primary structure comprises 430 residues: MGQSVVVLGAQWGDEGKGKIVDLLTEEIGAVVRFQGGHNAGHTLVINGKKTVLHLIPSGILRNGVLCLIGNGVVISPAALRKEIEELEDTGLEIRSRLKISPAAPLIMEYHIALDQAREKAAGGRAIGTTGRGIGPAYEDKVGRRGIRVADLHYPDQLAEKLRAALDYHNFVLTRYFGVDGMDFQRIYDEMLVFAEYVEPMKSDVAGILHDLRKQGKRVLFEGAQGTLLDIDHGTYPYVTSSSTTVGGALSGAGVGVQDIDYVLGIAKAYATRVGGGPFPTELDDKIGQGIRDRGVEYGASTGRPRRCGWMDIVALKRAVAINGITGLCITKLDVLDGMDKLKICIAYEYHDKRSEYAPLDAQGWEECTPVYLEFPGWNESTHGITSWEKLPPAARAYLCALEELAGCPIGIVSTGPDREHTIMLHDPFA.

GTP contacts are provided by residues 13–19 (GDEGKGK) and 41–43 (GHT). Residue Asp14 is the Proton acceptor of the active site. 2 residues coordinate Mg(2+): Asp14 and Gly41. Residues 14-17 (DEGK), 39-42 (NAGH), Thr130, Arg144, Gln225, Thr240, and Arg304 each bind IMP. His42 serves as the catalytic Proton donor. 300-306 (ASTGRPR) is a substrate binding site. GTP-binding positions include Arg306, 332–334 (KLD), and 414–416 (STG).

It belongs to the adenylosuccinate synthetase family. Homodimer. The cofactor is Mg(2+).

The protein resides in the cytoplasm. It carries out the reaction IMP + L-aspartate + GTP = N(6)-(1,2-dicarboxyethyl)-AMP + GDP + phosphate + 2 H(+). It functions in the pathway purine metabolism; AMP biosynthesis via de novo pathway; AMP from IMP: step 1/2. In terms of biological role, plays an important role in the de novo pathway of purine nucleotide biosynthesis. Catalyzes the first committed step in the biosynthesis of AMP from IMP. This chain is Adenylosuccinate synthetase, found in Xylella fastidiosa (strain M12).